A 437-amino-acid chain; its full sequence is Adenosylhomocysteinase (437 aa).

Residues T54, D125, and E170 each coordinate substrate. 171-173 (TTT) provides a ligand contact to NAD(+). Substrate-binding residues include K200 and D204. NAD(+) is bound by residues N205, 234-239 (GYGWVG), E258, N293, 314-316 (AGH), and N361.

The protein belongs to the adenosylhomocysteinase family. NAD(+) is required as a cofactor.

The protein resides in the cytoplasm. It carries out the reaction S-adenosyl-L-homocysteine + H2O = L-homocysteine + adenosine. It participates in amino-acid biosynthesis; L-homocysteine biosynthesis; L-homocysteine from S-adenosyl-L-homocysteine: step 1/1. May play a key role in the regulation of the intracellular concentration of adenosylhomocysteine. The polypeptide is Adenosylhomocysteinase (Pyrobaculum aerophilum (strain ATCC 51768 / DSM 7523 / JCM 9630 / CIP 104966 / NBRC 100827 / IM2)).